A 615-amino-acid polypeptide reads, in one-letter code: 1-deoxy-D-xylulose-5-phosphate synthase (615 aa).

Thiamine diphosphate is bound by residues H72 and 113 to 115 (GHA). D144 is a Mg(2+) binding site. Residues 145 to 146 (GA), N173, Y281, and E360 contribute to the thiamine diphosphate site. N173 contributes to the Mg(2+) binding site.

This sequence belongs to the transketolase family. DXPS subfamily. As to quaternary structure, homodimer. It depends on Mg(2+) as a cofactor. Requires thiamine diphosphate as cofactor.

It carries out the reaction D-glyceraldehyde 3-phosphate + pyruvate + H(+) = 1-deoxy-D-xylulose 5-phosphate + CO2. It functions in the pathway metabolic intermediate biosynthesis; 1-deoxy-D-xylulose 5-phosphate biosynthesis; 1-deoxy-D-xylulose 5-phosphate from D-glyceraldehyde 3-phosphate and pyruvate: step 1/1. Its function is as follows. Catalyzes the acyloin condensation reaction between C atoms 2 and 3 of pyruvate and glyceraldehyde 3-phosphate to yield 1-deoxy-D-xylulose-5-phosphate (DXP). This is 1-deoxy-D-xylulose-5-phosphate synthase from Thermus thermophilus (strain ATCC 27634 / DSM 579 / HB8).